The sequence spans 933 residues: Probable Rho-type GTPase-activating protein 4 (933 aa).

2 consecutive LIM zinc-binding domains span residues Cys-22 to Asp-80 and Ile-81 to Cys-129. 2 disordered regions span residues Pro-181 to Arg-200 and Glu-304 to Thr-338. Over residues Arg-325–Thr-338 the composition is skewed to polar residues. At Ser-353 the chain carries Phosphoserine. Disordered stretches follow at residues Arg-415 to Ala-435, Ser-605 to Glu-628, and Gly-641 to Ser-660. Over residues Arg-619 to Glu-628 the composition is skewed to polar residues. Ser-625 is modified (phosphoserine). Over residues Arg-643–Ser-652 the composition is skewed to basic and acidic residues. Phosphoserine is present on residues Ser-738 and Ser-740. Residues Asn-753–Phe-932 form the Rho-GAP domain.

Its function is as follows. GTPase-activating protein for Rho-type proteins. The protein is Probable Rho-type GTPase-activating protein 4 (rga4) of Schizosaccharomyces pombe (strain 972 / ATCC 24843) (Fission yeast).